The following is a 580-amino-acid chain: Capsid vertex component 2 (580 aa).

Interaction with major capsid protein/MCP regions lie at residues 1-49 (MDPY…ETAA) and 1-50 (MDPY…TAAE). Residues 108-129 (AEEADAARGDEPAGGGDGGAPP) are disordered. Residues 119 to 128 (PAGGGDGGAP) are compositionally biased toward gly residues.

The protein belongs to the herpesviridae CVC2 protein family. In terms of assembly, heterodimerizes with CVC1. Interacts with major capsid protein/MCP and triplex capsid protein 1/TRX1 at the pentamer vertices. Interacts with the large tegument protein/LTP. Interacts with host NUP214; this interaction might be essential to the capsid docking to the host nuclear pore. Interacts with host TMEM250.

It is found in the virion. Its subcellular location is the host nucleus. Capsid vertex-specific component that plays a role during viral DNA encapsidation, assuring correct genome cleavage and presumably stabilizing capsids that contain full-length viral genomes. Participates in the interaction between the capsid and the tegument through interaction with the large tegument protein/LTP. May mediate the capsid docking to the nuclear pore allowing entry of the viral genome into the host nucleus through binding to host nucleoporins NUP214. In Human herpesvirus 1 (strain 17) (HHV-1), this protein is Capsid vertex component 2.